Here is a 172-residue protein sequence, read N- to C-terminus: Large ribosomal subunit protein uL10 (172 aa).

The protein belongs to the universal ribosomal protein uL10 family. In terms of assembly, part of the ribosomal stalk of the 50S ribosomal subunit. The N-terminus interacts with L11 and the large rRNA to form the base of the stalk. The C-terminus forms an elongated spine to which L12 dimers bind in a sequential fashion forming a multimeric L10(L12)X complex.

Functionally, forms part of the ribosomal stalk, playing a central role in the interaction of the ribosome with GTP-bound translation factors. This is Large ribosomal subunit protein uL10 from Rhizobium meliloti (strain 1021) (Ensifer meliloti).